We begin with the raw amino-acid sequence, 114 residues long: Hemerythrin subunit 2 (114 aa).

Residues H26, H55, E59, H74, H78, H102, and D107 each coordinate Fe cation.

This sequence belongs to the hemerythrin family.

Hemerythrin is a respiratory protein in blood cells of certain marine worms. The oxygen-binding site in each chain contains two iron atoms. In Golfingia vulgaris (Marine worm), this protein is Hemerythrin subunit 2.